We begin with the raw amino-acid sequence, 233 residues long: Ribonuclease 3 (233 aa).

In terms of domain architecture, RNase III spans 7-136 (KQYLLSEFNI…FIGALYLDQG (130 aa)). Residue Glu49 coordinates Mg(2+). Asp53 is a catalytic residue. Residues Asp122 and Glu125 each coordinate Mg(2+). Residue Glu125 is part of the active site. The region spanning 162–232 (DFKSRLQEKL…ARAALKLLEE (71 aa)) is the DRBM domain.

This sequence belongs to the ribonuclease III family. Homodimer. The cofactor is Mg(2+).

It localises to the cytoplasm. It carries out the reaction Endonucleolytic cleavage to 5'-phosphomonoester.. Its function is as follows. Digests double-stranded RNA. Involved in the processing of primary rRNA transcript to yield the immediate precursors to the large and small rRNAs (23S and 16S). Processes some mRNAs, and tRNAs when they are encoded in the rRNA operon. Processes pre-crRNA and tracrRNA of type II CRISPR loci if present in the organism. In Leuconostoc citreum (strain KM20), this protein is Ribonuclease 3.